A 211-amino-acid chain; its full sequence is MRVRKRKGAQEHLENNPHYVILEPEAAKGRWCEVFGNDHPIHIEVGSGKGAFITGMALKNPEINYIGIDIQLSVLSYALDKVLASQAPNVRLLRVDGSSLTNYFDAGEVDMMYLNFSDPWPKSRHEKRRLTYKSFLDTYKQILPENGEIHFKTDNRGLFEYSLASFSQYGMTLKQVWLDLHASDYQGNVMTEYEARFAKKGQIIYRLEATF.

S-adenosyl-L-methionine contacts are provided by glutamate 44, aspartate 69, aspartate 96, and aspartate 118. The active site involves aspartate 118. Position 122 (lysine 122) interacts with substrate. The interval 124 to 129 is interaction with RNA; sequence RHEKRR. Substrate-binding positions include aspartate 154 and 191 to 194; that span reads TEYE.

The protein belongs to the class I-like SAM-binding methyltransferase superfamily. TrmB family.

The catalysed reaction is guanosine(46) in tRNA + S-adenosyl-L-methionine = N(7)-methylguanosine(46) in tRNA + S-adenosyl-L-homocysteine. Its pathway is tRNA modification; N(7)-methylguanine-tRNA biosynthesis. Catalyzes the formation of N(7)-methylguanine at position 46 (m7G46) in tRNA. The polypeptide is tRNA (guanine-N(7)-)-methyltransferase (Streptococcus equi subsp. equi (strain 4047)).